Here is a 154-residue protein sequence, read N- to C-terminus: Small ribosomal subunit protein uS11c (154 aa).

It belongs to the universal ribosomal protein uS11 family. Part of the 30S ribosomal subunit.

It localises to the plastid. In Helicosporidium sp. subsp. Simulium jonesii (Green alga), this protein is Small ribosomal subunit protein uS11c.